Consider the following 487-residue polypeptide: MELYYLTAHELSDLLNRKEISSEEATAAIIDRIEAVDGRVQAYLTRTAEQALEEARAVDAARARGETLGPLAGVPMALKDNLCTEGVRTTCSSRMLADWVPPYDATVVRRLKEAGAVMLGKLNMDEFAMGSSTENSSFFPTRNPWDLERVPGGSSGGAVAAVAAGEAYFALGSDTGGSIRQPASFCGVVGMKPTYGRVSRYGLVAFASSLDQIGPITRDVTDCALVLEAIAGHDPLDSTSADLPVPDYRSALKPEVKGLKIGVPREYFGAGMEPEVAAIVRRAIAKLEELGAVCEETSLPHTEYALPAYYLVAPAEASSNLARYDGVSYGLRVPGKDIIEMYMNTRSQGFGPEVKRRIMLGTYALSSGYYDAYYLKALKVRTLIRRDFETAFEKYDLLATPTSPTVAFRLGEKAGDPLAMYLSDLCTIPINMAGLPALSLPCGFSQGLPVGLQLIGRPFAEATLLQAAYAFEQSTEYHRRRPELGVA.

Active-site charge relay system residues include Lys79 and Ser154. Ser178 (acyl-ester intermediate) is an active-site residue.

This sequence belongs to the amidase family. GatA subfamily. In terms of assembly, heterotrimer of A, B and C subunits.

It catalyses the reaction L-glutamyl-tRNA(Gln) + L-glutamine + ATP + H2O = L-glutaminyl-tRNA(Gln) + L-glutamate + ADP + phosphate + H(+). In terms of biological role, allows the formation of correctly charged Gln-tRNA(Gln) through the transamidation of misacylated Glu-tRNA(Gln) in organisms which lack glutaminyl-tRNA synthetase. The reaction takes place in the presence of glutamine and ATP through an activated gamma-phospho-Glu-tRNA(Gln). The protein is Glutamyl-tRNA(Gln) amidotransferase subunit A of Moorella thermoacetica (strain ATCC 39073 / JCM 9320).